Consider the following 473-residue polypeptide: Bifunctional protein HldE (473 aa).

Residues 1-317 are ribokinase; sequence MTHGLPHFTS…LQQALHPRAI (317 aa). 195–198 serves as a coordination point for ATP; that stretch reads NLAE. Residue aspartate 264 is part of the active site. The tract at residues 343 to 473 is cytidylyltransferase; sequence MTNGCFDILH…SQIIDIIRKN (131 aa).

This sequence in the N-terminal section; belongs to the carbohydrate kinase PfkB family. It in the C-terminal section; belongs to the cytidylyltransferase family. As to quaternary structure, homodimer.

It catalyses the reaction D-glycero-beta-D-manno-heptose 7-phosphate + ATP = D-glycero-beta-D-manno-heptose 1,7-bisphosphate + ADP + H(+). The enzyme catalyses D-glycero-beta-D-manno-heptose 1-phosphate + ATP + H(+) = ADP-D-glycero-beta-D-manno-heptose + diphosphate. It functions in the pathway nucleotide-sugar biosynthesis; ADP-L-glycero-beta-D-manno-heptose biosynthesis; ADP-L-glycero-beta-D-manno-heptose from D-glycero-beta-D-manno-heptose 7-phosphate: step 1/4. Its pathway is nucleotide-sugar biosynthesis; ADP-L-glycero-beta-D-manno-heptose biosynthesis; ADP-L-glycero-beta-D-manno-heptose from D-glycero-beta-D-manno-heptose 7-phosphate: step 3/4. Functionally, catalyzes the phosphorylation of D-glycero-D-manno-heptose 7-phosphate at the C-1 position to selectively form D-glycero-beta-D-manno-heptose-1,7-bisphosphate. In terms of biological role, catalyzes the ADP transfer from ATP to D-glycero-beta-D-manno-heptose 1-phosphate, yielding ADP-D-glycero-beta-D-manno-heptose. This is Bifunctional protein HldE from Nitrosococcus oceani (strain ATCC 19707 / BCRC 17464 / JCM 30415 / NCIMB 11848 / C-107).